We begin with the raw amino-acid sequence, 349 residues long: N-acetyltaurine hydrolase (349 aa).

Histidine 26, histidine 28, glutamate 169, histidine 201, histidine 230, and aspartate 298 together coordinate a divalent metal cation.

Belongs to the metallo-dependent hydrolases superfamily. Phosphotriesterase family. Requires a divalent metal cation as cofactor. Expressed in the kidney, liver and brainstem.

The protein resides in the cytoplasm. Its subcellular location is the cytosol. It carries out the reaction N-acetyltaurine + H2O = taurine + acetate. It catalyses the reaction N-propanoyltaurine + H2O = propanoate + taurine. The enzyme catalyses N-acetyl-L-methionine + H2O = L-methionine + acetate. The catalysed reaction is N-acetyl-L-isoleucine + H2O = L-isoleucine + acetate. It carries out the reaction N-acetyl-L-leucine + H2O = L-leucine + acetate. It catalyses the reaction N-acetyl-L-valine + H2O = L-valine + acetate. In terms of biological role, N-acetyltaurine hydrolase that regulates feeding by catalyzing the hydrolysis of N-acetyltaurine into taurine and acetate. N-acetyltaurine has anorexigenic and anti-obesity effects that are dependent on GFRAL receptor and GDF15. PTER also acts on other N-acetyl amino acids (Met, Ile, Leu, Val) and N-propionyltaurine, but at lower rates. The sequence is that of N-acetyltaurine hydrolase from Mus musculus (Mouse).